The following is a 260-amino-acid chain: 2-amino-5-formylamino-6-ribosylaminopyrimidin-4(3H)-one 5'-monophosphate deformylase (260 aa).

Residues Glu-33, His-35, Asp-44, and His-112 each contribute to the Fe cation site.

The protein belongs to the creatininase superfamily. FAPy deformylase family. In terms of assembly, homodimer. Fe(2+) is required as a cofactor. Zn(2+) serves as cofactor.

The enzyme catalyses 2-amino-5-formylamino-6-(5-phospho-D-ribosylamino)pyrimidin-4(3H)-one + H2O = 2,5-diamino-6-(1-D-ribosylamino)pyrimidin-4(3H)-one 5'-phosphate + formate + H(+). Its pathway is cofactor biosynthesis; coenzyme F420 biosynthesis. The protein operates within cofactor biosynthesis; riboflavin biosynthesis. Functionally, catalyzes the hydrolysis of the formamide of 2-amino-5-formylamino-6-ribosylamino-4(3H)-pyrimidinone 5'-monophosphate (FAPy) to form 2,5-diamino-6-ribosylamino-4(3H)-pyrimidinone 5'-phosphate (APy). This Methanococcus voltae (strain ATCC BAA-1334 / A3) protein is 2-amino-5-formylamino-6-ribosylaminopyrimidin-4(3H)-one 5'-monophosphate deformylase.